The sequence spans 178 residues: Crossover junction endodeoxyribonuclease RuvC (178 aa).

Catalysis depends on residues Asp20, Glu80, and Asp154. Residues Asp20, Glu80, and Asp154 each coordinate Mg(2+).

It belongs to the RuvC family. As to quaternary structure, homodimer which binds Holliday junction (HJ) DNA. The HJ becomes 2-fold symmetrical on binding to RuvC with unstacked arms; it has a different conformation from HJ DNA in complex with RuvA. In the full resolvosome a probable DNA-RuvA(4)-RuvB(12)-RuvC(2) complex forms which resolves the HJ. Mg(2+) is required as a cofactor.

Its subcellular location is the cytoplasm. It carries out the reaction Endonucleolytic cleavage at a junction such as a reciprocal single-stranded crossover between two homologous DNA duplexes (Holliday junction).. Its function is as follows. The RuvA-RuvB-RuvC complex processes Holliday junction (HJ) DNA during genetic recombination and DNA repair. Endonuclease that resolves HJ intermediates. Cleaves cruciform DNA by making single-stranded nicks across the HJ at symmetrical positions within the homologous arms, yielding a 5'-phosphate and a 3'-hydroxyl group; requires a central core of homology in the junction. The consensus cleavage sequence is 5'-(A/T)TT(C/G)-3'. Cleavage occurs on the 3'-side of the TT dinucleotide at the point of strand exchange. HJ branch migration catalyzed by RuvA-RuvB allows RuvC to scan DNA until it finds its consensus sequence, where it cleaves and resolves the cruciform DNA. This chain is Crossover junction endodeoxyribonuclease RuvC, found in Rhodopirellula baltica (strain DSM 10527 / NCIMB 13988 / SH1).